The following is a 20-amino-acid chain: DnaJ homolog subfamily C member 1 (20 aa).

Over tryptophan 1–tyrosine 20 the chain is Lumenal. A J domain is found at asparagine 18–tyrosine 20.

As to quaternary structure, interacts (via SANT 2 domain) with SERPINA3; the interaction delays the formation of the covalent inhibitory complex SERPINA3-chymotrypsin, but does not alter the catalytic activity of SERPINA3. Interacts (via SANT 2 domain) with ITIH4 (via C-terminus); the interaction protects ITIH4 against in vitro cleavage by kallikrein. Interacts (via J domain) with HSPA5. Interacts (via cytosolic domain) with ribosomes.

It is found in the endoplasmic reticulum membrane. It localises to the nucleus membrane. The protein localises to the microsome membrane. The chain is DnaJ homolog subfamily C member 1 (DNAJC1) from Canis lupus familiaris (Dog).